The chain runs to 490 residues: Betaine aldehyde dehydrogenase (490 aa).

Residue aspartate 93 coordinates K(+). 150–152 (GAW) serves as a coordination point for NAD(+). The active-site Charge relay system is lysine 162. 176–179 (KPSE) is a binding site for NAD(+). Valine 180 provides a ligand contact to K(+). 230–233 (GVKT) is a binding site for NAD(+). Leucine 246 is a K(+) binding site. Glutamate 252 acts as the Proton acceptor in catalysis. NAD(+)-binding residues include glycine 254, cysteine 286, and glutamate 387. Cysteine 286 serves as the catalytic Nucleophile. Cysteine sulfenic acid (-SOH) is present on cysteine 286. K(+)-binding residues include lysine 457 and glycine 460. Residue glutamate 464 is the Charge relay system of the active site.

Belongs to the aldehyde dehydrogenase family. In terms of assembly, dimer of dimers. The cofactor is K(+).

It carries out the reaction betaine aldehyde + NAD(+) + H2O = glycine betaine + NADH + 2 H(+). Its pathway is amine and polyamine biosynthesis; betaine biosynthesis via choline pathway; betaine from betaine aldehyde: step 1/1. Involved in the biosynthesis of the osmoprotectant glycine betaine. Catalyzes the irreversible oxidation of betaine aldehyde to the corresponding acid. This is Betaine aldehyde dehydrogenase from Serratia proteamaculans (strain 568).